Reading from the N-terminus, the 392-residue chain is uncharacterized protein (392 aa).

A mitochondrion-targeting transit peptide spans 1 to 34; it reads MCISSSSLLCGINSLKYASNRVGILIPPFQTASS. 8 helical membrane passes run 115-135, 150-172, 185-205, 208-225, 277-297, 299-319, 321-341, and 350-370; these read VAIM…WHWD, FRFM…WWTL, LLVN…KFGV, ALSV…VALQ, ATFV…AVYA, AAIF…VYPV, AGIF…LNYE, and AHVS…PAMW. The Nucleophile role is filled by Ser-292. The active site involves His-351.

This sequence belongs to the peptidase S54 family.

The protein resides in the mitochondrion inner membrane. This is an uncharacterized protein from Schizosaccharomyces pombe (strain 972 / ATCC 24843) (Fission yeast).